A 545-amino-acid polypeptide reads, in one-letter code: MSAKEVKFGVDARDRMLRGVEILNNAVKVTLGPKGRNVVLDKSYGAPRITKDGVTVAKEIELEDKFENMGAQMVREVASKSADAAGDGTTTATVLAAAIVKEGAKSVAAGMNPMDLKRGIDLAVEAVVADLVRNSKKVTSNEEIAQVGTISSNGDTEIGKFLADAMKKVGNEGVITVEEAKSLETELEIVEGMQFDRGYISPYFVTNADKMRVEMEDAYVLINEKKLSQLNELLPLLEAVVQSGKPLVIIAEDVEGEALATLVVNRLRGGLKVAAVKAPGFGDRRKAMLQDIAILTGGQAISEDLGIKLENVTLAMLGRAKKVMIDKENTTIVSGAGKKADIEARVNQIKAQIEETTSDYDREKLQERLAKLAGGVAVIRVGGATEVEVKERKDRVDDAMHATRAAVEEGIVPGGGVALLRASEQLKRIKTANDDQKTGVEIVRKALSAPARQIAINAGEDGSIIVGKILEKEQYSYGFDSQTGEYVNLISKGIIDPTKVVRAAIQNAASVAALLITTEAMVAELPKKNAAAPAMPGGGMGGMDF.

ATP is bound by residues 30 to 33 (TLGP), lysine 51, 87 to 91 (DGTTT), glycine 415, and aspartate 496.

It belongs to the chaperonin (HSP60) family. In terms of assembly, forms a cylinder of 14 subunits composed of two heptameric rings stacked back-to-back. Interacts with the co-chaperonin GroES.

The protein localises to the cytoplasm. It carries out the reaction ATP + H2O + a folded polypeptide = ADP + phosphate + an unfolded polypeptide.. In terms of biological role, together with its co-chaperonin GroES, plays an essential role in assisting protein folding. The GroEL-GroES system forms a nano-cage that allows encapsulation of the non-native substrate proteins and provides a physical environment optimized to promote and accelerate protein folding. The polypeptide is Chaperonin GroEL 1 (Nitrobacter hamburgensis (strain DSM 10229 / NCIMB 13809 / X14)).